The following is a 126-amino-acid chain: Aspartate 1-decarboxylase (126 aa).

S25 acts as the Schiff-base intermediate with substrate; via pyruvic acid in catalysis. Pyruvic acid (Ser) is present on S25. Residue T57 coordinates substrate. Y58 serves as the catalytic Proton donor. Position 73–75 (73–75 (GGA)) interacts with substrate.

The protein belongs to the PanD family. Heterooctamer of four alpha and four beta subunits. Requires pyruvate as cofactor. In terms of processing, is synthesized initially as an inactive proenzyme, which is activated by self-cleavage at a specific serine bond to produce a beta-subunit with a hydroxyl group at its C-terminus and an alpha-subunit with a pyruvoyl group at its N-terminus.

The protein localises to the cytoplasm. The enzyme catalyses L-aspartate + H(+) = beta-alanine + CO2. The protein operates within cofactor biosynthesis; (R)-pantothenate biosynthesis; beta-alanine from L-aspartate: step 1/1. Its function is as follows. Catalyzes the pyruvoyl-dependent decarboxylation of aspartate to produce beta-alanine. This is Aspartate 1-decarboxylase from Xanthomonas campestris pv. campestris (strain ATCC 33913 / DSM 3586 / NCPPB 528 / LMG 568 / P 25).